Here is a 205-residue protein sequence, read N- to C-terminus: MIGRLKGILVEKHAPEVLIDVGGVGYELQMPLTSFYELPLPGAEVIVYTHFVVREDAQLLYGFIHKEERSLFRLLIKANGVGPKLALTILSGMTAKEFIGCLERDDIATLIKLPGVGKKTAERLLVEMRDKLKSLMEASMGAEREFVLKSNFTPAPVAATVEEDAIAALLSLGYKPQQASKAVSSAFQEGMDPEQLIKAALKSML.

Residues 1 to 64 (MIGRLKGILV…EDAQLLYGFI (64 aa)) are domain I. The tract at residues 65–143 (HKEERSLFRL…SLMEASMGAE (79 aa)) is domain II. The tract at residues 144 to 156 (REFVLKSNFTPAP) is flexible linker. Residues 157–205 (VAATVEEDAIAALLSLGYKPQQASKAVSSAFQEGMDPEQLIKAALKSML) form a domain III region.

This sequence belongs to the RuvA family. As to quaternary structure, homotetramer. Forms an RuvA(8)-RuvB(12)-Holliday junction (HJ) complex. HJ DNA is sandwiched between 2 RuvA tetramers; dsDNA enters through RuvA and exits via RuvB. An RuvB hexamer assembles on each DNA strand where it exits the tetramer. Each RuvB hexamer is contacted by two RuvA subunits (via domain III) on 2 adjacent RuvB subunits; this complex drives branch migration. In the full resolvosome a probable DNA-RuvA(4)-RuvB(12)-RuvC(2) complex forms which resolves the HJ.

Its subcellular location is the cytoplasm. Its function is as follows. The RuvA-RuvB-RuvC complex processes Holliday junction (HJ) DNA during genetic recombination and DNA repair, while the RuvA-RuvB complex plays an important role in the rescue of blocked DNA replication forks via replication fork reversal (RFR). RuvA specifically binds to HJ cruciform DNA, conferring on it an open structure. The RuvB hexamer acts as an ATP-dependent pump, pulling dsDNA into and through the RuvAB complex. HJ branch migration allows RuvC to scan DNA until it finds its consensus sequence, where it cleaves and resolves the cruciform DNA. The protein is Holliday junction branch migration complex subunit RuvA of Shewanella amazonensis (strain ATCC BAA-1098 / SB2B).